A 234-amino-acid polypeptide reads, in one-letter code: UPF0104 membrane protein MJ1078 (234 aa).

Transmembrane regions (helical) follow at residues 32–52 (VGTV…LLFI), 70–90 (IKWG…FLIV), 123–143 (LITL…FIFL), 164–184 (LTAI…LIYI), and 198–218 (VLIL…AIMF).

This sequence belongs to the UPF0104 family.

It localises to the cell membrane. This Methanocaldococcus jannaschii (strain ATCC 43067 / DSM 2661 / JAL-1 / JCM 10045 / NBRC 100440) (Methanococcus jannaschii) protein is UPF0104 membrane protein MJ1078.